We begin with the raw amino-acid sequence, 264 residues long: Anamorsin homolog 2 (264 aa).

Positions 1–142 are N-terminal SAM-like domain; the sequence is MAATAAALAV…KVSWSMGSSF (142 aa). Positions 143–174 are linker; sequence PLKKATKGLPKIQIDDDSELIDEDSLLTEDDL. [2Fe-2S] cluster contacts are provided by C185, C194, C197, and C199. The fe-S binding site A stretch occupies residues 185–199; that stretch reads CEVGATRKACKNCTC. 4 residues coordinate [4Fe-4S] cluster: C225, C228, C236, and C239. Short sequence motifs (cx2C motif) lie at residues 225–228 and 236–239; these read CGNC and CGTC. A fe-S binding site B region spans residues 225–239; the sequence is CGNCGLGDAFRCGTC.

Belongs to the anamorsin family. In terms of assembly, monomer. It depends on [2Fe-2S] cluster as a cofactor. The cofactor is [4Fe-4S] cluster.

The protein localises to the cytoplasm. It is found in the mitochondrion intermembrane space. Component of the cytosolic iron-sulfur (Fe-S) protein assembly (CIA) machinery. Required for the maturation of extramitochondrial Fe-S proteins. Part of an electron transfer chain functioning in an early step of cytosolic Fe-S biogenesis, facilitating the de novo assembly of a [4Fe-4S] cluster on the cytosolic Fe-S scaffold complex. Electrons are transferred from NADPH via a FAD- and FMN-containing diflavin oxidoreductase. Together with the diflavin oxidoreductase, also required for the assembly of the diferric tyrosyl radical cofactor of ribonucleotide reductase (RNR), probably by providing electrons for reduction during radical cofactor maturation in the catalytic small subunit. This chain is Anamorsin homolog 2, found in Oryza sativa subsp. indica (Rice).